Here is a 505-residue protein sequence, read N- to C-terminus: Catalase (505 aa).

Residues 1-25 form a disordered region; that stretch reads MSQQDKKLTGVFGHPVSDRENSMTA. Catalysis depends on residues His-56 and Asn-129. Tyr-339 contributes to the heme binding site.

Belongs to the catalase family. As to quaternary structure, homodimer. The cofactor is heme.

It catalyses the reaction 2 H2O2 = O2 + 2 H2O. Functionally, decomposes hydrogen peroxide into water and oxygen; serves to protect cells from the toxic effects of hydrogen peroxide. The chain is Catalase (katA) from Staphylococcus aureus.